A 654-amino-acid polypeptide reads, in one-letter code: Sucrose:sucrose 1-fructosyltransferase (654 aa).

A propeptide spanning residues 1-106 (MESSAVVPGT…VSEKASGAYS (106 aa)) is cleaved from the precursor. Residue Asn-32 is glycosylated (N-linked (GlcNAc...) asparagine). Asp-136 is a catalytic residue. N-linked (GlcNAc...) asparagine glycosylation is found at Asn-328, Asn-457, Asn-491, Asn-506, and Asn-625.

The protein belongs to the glycosyl hydrolase 32 family. In terms of assembly, monomer. In terms of tissue distribution, accumulates at the base of growing leaves.

The protein localises to the vacuole. It carries out the reaction 2 sucrose = 1(F)-beta-D-fructosylsucrose + D-glucose. Transferase involved in fructan biosynthesis that catalyzes the production of 1-kestose (fructose and nystose to a lower extent) from sucrose. Also exhibits some hydrolase activity toward 1-kestose, thus producing fructose and sucrose. A weak fructosyltransferase activity leads to the formation of nystose from 1-kestose. The sequence is that of Sucrose:sucrose 1-fructosyltransferase (1-SST) from Festuca arundinacea (Tall fescue).